A 3174-amino-acid polypeptide reads, in one-letter code: Intermembrane lipid transfer protein VPS13A (3174 aa).

Residues 3-116 (FESVVVDVLN…LMEAKQQELK (114 aa)) form the Chorein N-terminal domain. 3 TPR repeats span residues 212–245 (LFAY…ENIV), 373–406 (LTSK…QTAE), and 537–575 (IDSF…NPLD). Residue Ser839 is modified to Phosphoserine. Residues 842-848 (EFFDAPC) carry the FFAT motif. 2 TPR repeats span residues 1256–1289 (VIDL…LLPL) and 1291–1320 (LEVV…KPME). The residue at position 1416 (Ser1416) is a Phosphoserine. One copy of the TPR 6 repeat lies at 2009 to 2041 (YEGDTLLGTASPENEFNIPLGSYRSFIFLKPED). The SHR-BD domain occupies 2209–2454 (VAFHSPYWMV…VFYTWADPVG (246 aa)). 3 TPR repeats span residues 2568 to 2601 (PMSV…DTNV), 2717 to 2751 (LGFI…FKEE), and 2860 to 2898 (ILGL…PEEF). Residues 2751–3174 (EYKTASLVDQ…QEAREPSPSL (424 aa)) form a required for mitochondrial localization region. The interval 2953–3027 (PAGFREGITR…SSTFQGIKRA (75 aa)) is required for lipid droplet localization. One copy of the TPR 10 repeat lies at 3086 to 3119 (MLMITRRGVLFVTKGTFGQLTCEWQYSFDEFTKE).

This sequence belongs to the VPS13 family. In terms of assembly, interacts (via FFAT motif) with VAPA and VAPB. Interacts with RAB7A. Interacts with XK. Expressed in red blood cells (at protein level). Widely expressed, with high expression in brain, heart, skeletal muscle and kidney.

It is found in the mitochondrion outer membrane. Its subcellular location is the endoplasmic reticulum membrane. It localises to the endosome membrane. The protein localises to the lysosome membrane. The protein resides in the lipid droplet. It is found in the golgi apparatus. Its subcellular location is the cytoplasmic vesicle. It localises to the secretory vesicle. The protein localises to the neuronal dense core vesicle. In terms of biological role, mediates the transfer of lipids between membranes at organelle contact sites. Binds phospholipids. Required for the formation or stabilization of ER-mitochondria contact sites which enable transfer of lipids between the ER and mitochondria. Negatively regulates lipid droplet size and motility. Required for efficient lysosomal protein degradation. This chain is Intermembrane lipid transfer protein VPS13A (VPS13A), found in Homo sapiens (Human).